The primary structure comprises 97 residues: MTSMNKGNEEKTQGANRKQLLEELNEKRESYCLVERSNEVNLLRVQKRHFSKAYQTLACMHIKESVPESTRTSWVKHDLSVHKEKRHFLPKNNAIFG.

The protein belongs to the SPATA45 family.

The polypeptide is Spermatogenesis-associated protein 45 (Spata45) (Mus musculus (Mouse)).